The sequence spans 124 residues: MIAKTAVALALVASAVALRPTMSLSANRREVVAGAGAAAVVAPMLRPAEANAVYTRGTSLSAPVITIFDARGCTDHANKEYKGDWSGRAEDDECCVKIQMQKISVAEDVARLVRLECLNELKSK.

R71 contributes to the (2R,3E)-phycocyanobilin binding site. Positions 73, 81, and 97 each coordinate mesobiliverdin.

This sequence belongs to the phycoerythrin family. In terms of assembly, heterotetramer of 2 different alpha chains and 2 identical beta chains which form 2 alpha-beta heterodimers within the heterotetramer. Post-translationally, contains one phycocyanobilin chromophore and one mesobiliverdin chromophore with binding mediated by both the alpha and beta subunits.

It localises to the plastid. The protein resides in the chloroplast thylakoid membrane. Its function is as follows. Light-harvesting photosynthetic tetrapyrrole chromophore-protein from the phycobiliprotein complex. This chain is Phycocyanin PC645 alpha-3 subunit, found in Chroomonas sp. (strain CCMP270).